Reading from the N-terminus, the 688-residue chain is Pescadillo homolog (688 aa).

The 120-residue stretch at 351–470 (EVASLFASFT…KLLRHDLYAP (120 aa)) folds into the BRCT domain. 2 disordered regions span residues 411–442 (RPPL…GTRM) and 496–688 (AEQE…TKGR). Positions 412–424 (PPLPESALPPLPQ) are enriched in pro residues. Residues 496–536 (AEQESDGEAERQAEEENEEEESEVEGLSMDKEMVETENSEA) adopt a coiled-coil conformation. Acidic residues-rich tracts occupy residues 510–519 (EENEEEESEV), 530–544 (ETEN…EESV), 554–565 (GSDDEEEESEED), and 576–589 (EAAD…DDEE). Residues 619–634 (KKSKKQKPLAKKHAAQ) are compositionally biased toward basic residues. Residues 627–686 (LAKKHAAQKKKEQEELERQKMMMSRKKRKLLDKMLYSNKKKDEEAEKLRRKRRKIEQGTK) adopt a coiled-coil conformation. Basic and acidic residues predominate over residues 635–646 (KKKEQEELERQK).

It belongs to the pescadillo family. Component of the NOP7 complex, composed of ERB1, NOP7 and YTM1. The complex is held together by ERB1, which interacts with NOP7 via its N-terminal domain and with YTM1 via a high-affinity interaction between the seven-bladed beta-propeller domains of the 2 proteins. The NOP7 complex associates with the 66S pre-ribosome.

It localises to the nucleus. The protein localises to the nucleolus. It is found in the nucleoplasm. Component of the NOP7 complex, which is required for maturation of the 25S and 5.8S ribosomal RNAs and formation of the 60S ribosome. This is Pescadillo homolog from Coccidioides immitis (strain RS) (Valley fever fungus).